Consider the following 343-residue polypeptide: Olfactory receptor 6K6 (343 aa).

Residues 1-53 (MKQYSVGNQHSNYRSLLFPFLCSQMTQLTASGNQTMVTEFLFSMFPHAHRGGL) lie on the Extracellular side of the membrane. A glycan (N-linked (GlcNAc...) asparagine) is linked at Asn-33. A helical membrane pass occupies residues 54 to 74 (LFFIPLLLIYGFILTGNLIMF). Topologically, residues 75-82 (IVIQVGMA) are cytoplasmic. Residues 83-103 (LHTPLYFFISVLSFLEICYTT) form a helical membrane-spanning segment. Residues 104–127 (TTIPKMLSCLISEQKSISVAGCLL) lie on the Extracellular side of the membrane. Residues Cys-125 and Cys-217 are joined by a disulfide bond. The helical transmembrane segment at 128 to 148 (QMYFFHSLGITESCVLTAMAI) threads the bilayer. The Cytoplasmic segment spans residues 149 to 167 (DRYIAICNPLRYPTIMIPK). A helical membrane pass occupies residues 168–188 (LCIQLTVGSCFCGFLLVLPEI). Over 189–224 (AWISTLPFCGSNQIHQIFCDFTPVLSLACTDTFLVV) the chain is Extracellular. A helical membrane pass occupies residues 225–244 (IVDAIHAAEIVASFLVIALS). Over 245–264 (YIRIIIVILGMHSAEGHHKA) the chain is Cytoplasmic. The chain crosses the membrane as a helical span at residues 265–285 (FSTCAAHLAVFLLFFGSVAVM). The Extracellular segment spans residues 286 to 298 (YLRFSATYSVFWD). A helical transmembrane segment spans residues 299–319 (TAIAVTFVILAPFFNPIIYSL). The Cytoplasmic portion of the chain corresponds to 320 to 343 (KNKDMKEAIGRLFHYQKRAGWAGK).

This sequence belongs to the G-protein coupled receptor 1 family.

It localises to the cell membrane. Odorant receptor. This Homo sapiens (Human) protein is Olfactory receptor 6K6 (OR6K6).